We begin with the raw amino-acid sequence, 371 residues long: MIKIVGLVGWRGMVGSVLLKRMQEENDFSRIKPVFFSTSQFGQDGPIINNISYNILENAYNIDVLKEMDIIITCQGGSYTKEIYPTLRKNGWKGYWIDAASNLRMKNDSVIILDPVNYNVIEDSINKGIRTFVGGNCTISLMLMSLGGLFQTELVEWIAVSTYQAASGAGARHMIELLNQMGILYKSVETDLLKGSHSILSIEDKVTKISRSVNFPVKNFSVPLAASLIPWIDTEMSNGQSREEWKGQAETNKILGTKDTILIDGTCVRIGSLRCHSQSFVIKLKKDVSLEDIEEIIRNHNKWVDVIPNSIQDTLLKLTPSSVTGTLNIPIGRLRKLNMGKKYLSAFTVGDQLLWGAAEPLRRMLNILINI.

Residues 11–14 (RGMV), 38–39 (TS), and Q75 each bind NADP(+). R104 is a binding site for phosphate. The active-site Acyl-thioester intermediate is C137. A substrate-binding site is contributed by Q164. 167–168 (SG) serves as a coordination point for NADP(+). Substrate is bound at residue E243. K246 provides a ligand contact to phosphate. R269 serves as a coordination point for substrate. Residue H276 is the Proton acceptor of the active site. An NADP(+)-binding site is contributed by Q352.

This sequence belongs to the aspartate-semialdehyde dehydrogenase family. In terms of assembly, homodimer.

The catalysed reaction is L-aspartate 4-semialdehyde + phosphate + NADP(+) = 4-phospho-L-aspartate + NADPH + H(+). The protein operates within amino-acid biosynthesis; L-lysine biosynthesis via DAP pathway; (S)-tetrahydrodipicolinate from L-aspartate: step 2/4. It functions in the pathway amino-acid biosynthesis; L-methionine biosynthesis via de novo pathway; L-homoserine from L-aspartate: step 2/3. Its pathway is amino-acid biosynthesis; L-threonine biosynthesis; L-threonine from L-aspartate: step 2/5. In terms of biological role, catalyzes the NADPH-dependent formation of L-aspartate-semialdehyde (L-ASA) by the reductive dephosphorylation of L-aspartyl-4-phosphate. The polypeptide is Aspartate-semialdehyde dehydrogenase (Buchnera aphidicola subsp. Acyrthosiphon pisum (strain APS) (Acyrthosiphon pisum symbiotic bacterium)).